A 177-amino-acid polypeptide reads, in one-letter code: MSRKLRYGLSAAVLALIAAGASAPEILDQFLDEKEGNHTTAYRDGAGIWTICRGATRVDGKPVIPGMKLSKEKCDRVNAIERDKALAWVEKNIKVPLTEPQKAGIASFCPYNIGPGKCFPSTFYRRINAGDRKGACEAIRWWIKDGGRDCRIRSNNCYGQVSRRDQESALACWGIDR.

Residues 1–23 (MSRKLRYGLSAAVLALIAAGASA) traverse the membrane as a helical; Signal-anchor for type II membrane protein segment. Catalysis depends on proton donor/acceptor residues Glu35 and Asp44.

This sequence belongs to the glycosyl hydrolase 24 family.

It is found in the host cell inner membrane. The catalysed reaction is Hydrolysis of (1-&gt;4)-beta-linkages between N-acetylmuramic acid and N-acetyl-D-glucosamine residues in a peptidoglycan and between N-acetyl-D-glucosamine residues in chitodextrins.. Its function is as follows. Signal-arrest-release (SAR) endolysin with lysozyme activity that degrades host peptidoglycans and participates with the pinholin and spanin proteins in the sequential events which lead to programmed host cell lysis releasing the mature viral particles. Once the pinholin has permeabilized the host cell membrane, the SAR-endolysin is released into the periplasm where it breaks down the peptidoglycan layer. The sequence is that of SAR-endolysin (R) from Escherichia phage 933W (Bacteriophage 933W).